Reading from the N-terminus, the 66-residue chain is Large ribosomal subunit protein bL33 (66 aa).

It belongs to the bacterial ribosomal protein bL33 family.

The polypeptide is Large ribosomal subunit protein bL33 (Wolbachia pipientis subsp. Culex pipiens (strain wPip)).